Here is a 233-residue protein sequence, read N- to C-terminus: tRNA (guanine-N(7)-)-methyltransferase (233 aa).

Residues Glu-65, Glu-90, Asp-117, and Asp-139 each coordinate S-adenosyl-L-methionine. Asp-139 is an active-site residue. Substrate-binding positions include Lys-143, Asp-175, and 212–215 (TRYE).

Belongs to the class I-like SAM-binding methyltransferase superfamily. TrmB family.

The enzyme catalyses guanosine(46) in tRNA + S-adenosyl-L-methionine = N(7)-methylguanosine(46) in tRNA + S-adenosyl-L-homocysteine. It participates in tRNA modification; N(7)-methylguanine-tRNA biosynthesis. Functionally, catalyzes the formation of N(7)-methylguanine at position 46 (m7G46) in tRNA. The protein is tRNA (guanine-N(7)-)-methyltransferase of Roseobacter denitrificans (strain ATCC 33942 / OCh 114) (Erythrobacter sp. (strain OCh 114)).